An 840-amino-acid polypeptide reads, in one-letter code: Exocyst complex component 7 (840 aa).

Positions 1-112 (MSAPPRLSAR…ATSTTSPFSY (112 aa)) are disordered. The span at 19–31 (SNAPSPTSPTGLK) shows a compositional bias: polar residues. Composition is skewed to low complexity over residues 50–73 (KSSV…TLPK) and 83–111 (QQQQ…SPFS). Residues 193–227 (KNNATSELTEQDDQLENDKRDLQFIKEQLEKNNSM) adopt a coiled-coil conformation. The segment at 601 to 638 (QDNNNSNSNSNAPSSTSSNSKSSSSSSSSSSSNSASST) is disordered. Positions 603–637 (NNNSNSNSNAPSSTSSNSKSSSSSSSSSSSNSASS) are enriched in low complexity.

Belongs to the EXO70 family. In terms of assembly, the exocyst complex is composed of sec3/exoc1, sec5/exoc2, sec6/exoc3, sec8/exoc4, sec10/exoc5, sec15/exoc6, exo70/exoc7 and exo84/exoc8.

It localises to the cytoplasm. Its subcellular location is the cytosol. The protein resides in the cell membrane. The protein localises to the midbody. It is found in the midbody ring. Functionally, component of the exocyst complex involved in the docking of exocytic vesicles with fusion sites on the plasma membrane. This is Exocyst complex component 7 (exoc7) from Dictyostelium discoideum (Social amoeba).